The sequence spans 441 residues: Thymidine phosphorylase (441 aa).

It belongs to the thymidine/pyrimidine-nucleoside phosphorylase family. In terms of assembly, homodimer.

It carries out the reaction thymidine + phosphate = 2-deoxy-alpha-D-ribose 1-phosphate + thymine. The protein operates within pyrimidine metabolism; dTMP biosynthesis via salvage pathway; dTMP from thymine: step 1/2. The enzymes which catalyze the reversible phosphorolysis of pyrimidine nucleosides are involved in the degradation of these compounds and in their utilization as carbon and energy sources, or in the rescue of pyrimidine bases for nucleotide synthesis. The protein is Thymidine phosphorylase of Chromobacterium violaceum (strain ATCC 12472 / DSM 30191 / JCM 1249 / CCUG 213 / NBRC 12614 / NCIMB 9131 / NCTC 9757 / MK).